The following is an 894-amino-acid chain: Alanine--tRNA ligase (894 aa).

Zn(2+)-binding residues include histidine 587, histidine 591, cysteine 691, and histidine 695. The interval 739–758 is disordered; it reads AEGDRAAEEAKGRLQEERDA.

The protein belongs to the class-II aminoacyl-tRNA synthetase family. It depends on Zn(2+) as a cofactor.

Its subcellular location is the cytoplasm. It carries out the reaction tRNA(Ala) + L-alanine + ATP = L-alanyl-tRNA(Ala) + AMP + diphosphate. In terms of biological role, catalyzes the attachment of alanine to tRNA(Ala) in a two-step reaction: alanine is first activated by ATP to form Ala-AMP and then transferred to the acceptor end of tRNA(Ala). Also edits incorrectly charged Ser-tRNA(Ala) and Gly-tRNA(Ala) via its editing domain. The polypeptide is Alanine--tRNA ligase (Cenarchaeum symbiosum (strain A)).